We begin with the raw amino-acid sequence, 614 residues long: Zinc metalloproteinase-disintegrin-like protein H4 subunit A (614 aa).

The N-terminal stretch at 1–20 (MIQPLLVVTCLVVFPYQVSS) is a signal peptide. Residues 21–193 (IILESGNVND…RKASQLVATS (173 aa)) constitute a propeptide that is removed on maturation. At Glu-194 the chain carries Pyrrolidone carboxylic acid (Glu). Positions 201-397 (KYIELVIVVD…IKSKCIDNKP (197 aa)) constitute a Peptidase M12B domain. Asn-220 is a glycosylation site (N-linked (GlcNAc...) asparagine). 17 disulfide bridges follow: Cys-312/Cys-392, Cys-352/Cys-376, Cys-354/Cys-359, Cys-408/Cys-437, Cys-419/Cys-432, Cys-421/Cys-427, Cys-431/Cys-454, Cys-445/Cys-451, Cys-450/Cys-476, Cys-463/Cys-483, Cys-470/Cys-502, Cys-495/Cys-507, Cys-514/Cys-564, Cys-529/Cys-575, Cys-542/Cys-552, Cys-559/Cys-601, and Cys-595/Cys-607. Residue His-337 participates in Zn(2+) binding. The Metal-binding signature appears at 337–348 (HELGHNLGMDHD). Glu-338 (proton acceptor) is an active-site residue. His-341 and His-347 together coordinate Zn(2+). The region spanning 405-491 (PAFCGNYFVE…ECPTDVLQRN (87 aa)) is the Disintegrin domain. The Ca(2+) site is built by Asn-410, Phe-412, Glu-414, Glu-417, and Asp-420. The N-linked (GlcNAc...) asparagine glycan is linked to Asn-433. A D/ECD-tripeptide motif is present at residues 469-471 (ECD). Ca(2+) is bound by residues Asp-471 and Asp-486.

It belongs to the venom metalloproteinase (M12B) family. P-III subfamily. As to quaternary structure, homodimer; disulfide-linked. Heterodimer of A and B subunits; disulfide-linked. Requires Zn(2+) as cofactor. N-glycosylated. In terms of processing, the N-terminus is blocked. As to expression, expressed by the venom gland (at protein level). Expressed by the venom gland.

It localises to the secreted. With respect to regulation, the proteolytic activity of the heterodimer of A and B subunits requires Zn(2+) and Ca(2+) ions. Heterodimer (A and B subunits): Zinc metalloprotease that has fibrinogenolytic and hemorrhagic activities. Cleaves insulin B chain preferably at '40-Tyr-|-Leu-41' bond, but also at '28-Gln-|-His-29' and '34-His-|-Leu-35' bonds. Hydrolyzes effectively isolated extracellular matrix (ECM) bovine fibronectin, and only slightly, basal membrane (BM) proteins human collagen IV and murine laminin, in vitro. Cleaves nidogen-1 (at '350-Ser-|-Phe-351' and '380-Tyr-|-Asn-381' bonds), but not laminin, in a solubilized BM preparation. Hydrolyzes plasma proteins involved in blood coagulation in vitro. It slightly shortens prothrombin time and significantly prolongs thrombin time. Has potent alpha-fibrinogenase activity cleaving human fibrinogen alpha chain at '441-Glu-|-Leu-442' and '539-Glu-|-Phe-540' bonds, and to a lesser extent, beta chain at '52-Lys-|-Arg-53' and '48-Pro-|-Leu-49' bonds, but does not cleave gamma chain. Hydrolyzes bovine prothrombin at '200-Ser-|-Gly-201' bond, but does not activate it, however, it cleaves fragment 1 and prethrombin 1 from it. Hydrolyzes bovine factor X heavy chain, but the cleavage does not produce an activated factor Xa heavy chain. No hydrolysis or activation of plasminogen. The ability to degrade some of the ECM, BM and plasma proteins is likely the main contributor to its hemorrhagic activity. Inhibits platelet aggregation induced by collagen in vitro. Its binding to glycosaminoglycans (GAGs) may assist in concentrating it in the proximity of blood vessel walls enabling in vivo degradation of BM protein components. Cytotoxic to cultured HeLa cancer cells in a concentration- and time-dependent manner. In the solubilized BM preparation (Matrigel), it induces morphological changes in the HeLa cells and inhibits their adhesion, however, the viability of the cells is not reduced. The chain is Zinc metalloproteinase-disintegrin-like protein H4 subunit A from Vipera ammodytes ammodytes (Western sand viper).